We begin with the raw amino-acid sequence, 163 residues long: Antimicrobial peptide 2 (163 aa).

The signal sequence occupies residues 1 to 22 (MLNMKSFALLMLFATLVGVTIA). Chitin-binding type-1 domains follow at residues 26 to 66 (NGKC…EIEP) and 69 to 107 (AGQC…SCLP). Disulfide bonds link cysteine 29–cysteine 42, cysteine 36–cysteine 48, and cysteine 41–cysteine 55. A propeptide spanning residues 58–67 (NTPLSEIEPT) is cleaved from the precursor. 4 disulfide bridges follow: cysteine 72–cysteine 83, cysteine 77–cysteine 89, cysteine 82–cysteine 96, and cysteine 101–cysteine 105. A propeptide spanning residues 100–163 (MCQGSCLPDM…QVEPAVTKAP (64 aa)) is cleaved from the precursor.

In terms of tissue distribution, expressed in roots, flowers, stem and leaves.

Its function is as follows. Antimicrobial peptide. The sequence is that of Antimicrobial peptide 2 from Stellaria media (Common chickweed).